The chain runs to 328 residues: Cytochrome c biogenesis protein CcsA (328 aa).

8 helical membrane-spanning segments follow: residues 12–32, 45–65, 72–92, 100–120, 145–165, 234–254, 263–283, and 296–316; these read HISF…LLLG, GMII…IFSG, LYES…VLCL, FNTI…SGLL, MILG…ILVI, TISL…VWAN, WDPK…YLHI, and IVAS…NLLG.

It belongs to the CcmF/CycK/Ccl1/NrfE/CcsA family. As to quaternary structure, may interact with Ccs1.

The protein localises to the plastid. It localises to the chloroplast thylakoid membrane. In terms of biological role, required during biogenesis of c-type cytochromes (cytochrome c6 and cytochrome f) at the step of heme attachment. In Phaseolus vulgaris (Kidney bean), this protein is Cytochrome c biogenesis protein CcsA.